Here is a 144-residue protein sequence, read N- to C-terminus: Transcriptional regulator MraZ (144 aa).

SpoVT-AbrB domains follow at residues 5 to 47 (EYDH…TLDE) and 76 to 119 (AVEV…DRET).

This sequence belongs to the MraZ family. As to quaternary structure, forms oligomers.

The protein localises to the cytoplasm. It is found in the nucleoid. In Staphylococcus aureus, this protein is Transcriptional regulator MraZ.